Here is a 119-residue protein sequence, read N- to C-terminus: MSQIDKASRRQKIKDRSRAAVAGTAVKPRLCIYRSLSQIYAQLIDDSGSTTILAVSSMSKENKELKGAGVEVCRTVGRQLGEKAMAKGITTVVFDRNGFRYHGRVKALADGAREAGLIF.

It belongs to the universal ribosomal protein uL18 family. As to quaternary structure, part of the 50S ribosomal subunit; part of the 5S rRNA/L5/L18/L25 subcomplex. Contacts the 5S and 23S rRNAs.

In terms of biological role, this is one of the proteins that bind and probably mediate the attachment of the 5S RNA into the large ribosomal subunit, where it forms part of the central protuberance. The sequence is that of Large ribosomal subunit protein uL18 from Chlorobium phaeovibrioides (strain DSM 265 / 1930) (Prosthecochloris vibrioformis (strain DSM 265)).